A 513-amino-acid polypeptide reads, in one-letter code: tRNA A64-2'-O-ribosylphosphate transferase (513 aa).

Functionally, tRNA backbone modifying enzyme that mediates initiator/ elongator tRNA discrimination. This enzyme modifies exclusively the initiator tRNA in position 64 using 5'-phosphoribosyl-1'-pyrophosphate as the modification donor. Recognize the stem-loop IV region that is unique in eukaryotic cytoplasmic initiator tRNAs. The sequence is that of tRNA A64-2'-O-ribosylphosphate transferase (RIT1) from Saccharomyces cerevisiae (strain ATCC 204508 / S288c) (Baker's yeast).